The primary structure comprises 202 residues: ATP-dependent Clp protease proteolytic subunit (202 aa).

Ser-101 functions as the Nucleophile in the catalytic mechanism. His-126 is a catalytic residue.

It belongs to the peptidase S14 family. Component of the chloroplastic Clp protease core complex.

Its subcellular location is the plastid. It localises to the chloroplast stroma. It catalyses the reaction Hydrolysis of proteins to small peptides in the presence of ATP and magnesium. alpha-casein is the usual test substrate. In the absence of ATP, only oligopeptides shorter than five residues are hydrolyzed (such as succinyl-Leu-Tyr-|-NHMec, and Leu-Tyr-Leu-|-Tyr-Trp, in which cleavage of the -Tyr-|-Leu- and -Tyr-|-Trp bonds also occurs).. Its function is as follows. Cleaves peptides in various proteins in a process that requires ATP hydrolysis. Has a chymotrypsin-like activity. Plays a major role in the degradation of misfolded proteins. The sequence is that of ATP-dependent Clp protease proteolytic subunit from Illicium oligandrum (Star anise).